A 483-amino-acid polypeptide reads, in one-letter code: Cyclic AMP-dependent transcription factor ATF-7 (483 aa).

Positions 1–285 are transactivation domain; the sequence is MGDDRPFVCN…GMVVGTASTM (285 aa). The C2H2-type zinc finger occupies 7-31; that stretch reads FVCNAPGCGQRFTNEDHLAVHKHKH. Thr-51 carries the post-translational modification Phosphothreonine; by MAPK11. 2 positions are modified to phosphothreonine: Thr-53 and Thr-101. Lys-107 is covalently cross-linked (Glycyl lysine isopeptide (Lys-Gly) (interchain with G-Cter in SUMO1)). Disordered regions lie at residues 110–148 and 299–345; these read EPVE…TPTP and HPDA…NRAA. 2 stretches are compositionally biased toward low complexity: residues 114 to 126 and 307 to 320; these read VDSS…ASSP and QPQV…PSTG. An essential for binding adenovirus 2 E1A region spans residues 325–483; it reads RTVDEDPDER…MTPQSQSAGR (159 aa). Residues 326–343 are compositionally biased toward basic and acidic residues; the sequence is TVDEDPDERRQRFLERNR. The 64-residue stretch at 332 to 395 folds into the bZIP domain; sequence DERRQRFLER…AQLKQLLLAH (64 aa). The tract at residues 334 to 354 is basic motif; the sequence is RRQRFLERNRAAASRCRQKRK. A leucine-zipper region spans residues 360-388; the sequence is LEKKAEELTSQNIQLSNEVTLLRNEVAQL. Residues 407 to 439 are disordered; that stretch reads TQGYLESPKESSEPTGSPAPVIQHSSATAPSNG. Ser-413 and Ser-423 each carry phosphoserine. The span at 429-439 shows a compositional bias: polar residues; sequence QHSSATAPSNG.

This sequence belongs to the bZIP family. As to quaternary structure, homodimer; binds DNA as homodimer. Heterodimer; heterodimerizes with other members of ATF family and with JUN family members. Interacts with JNK2; the interaction does not phosphorylate ATF7 but acts as a docking site for other ATF-associated partners such as JUN family members. Interacts (via its transactivation domain) with TAF12 (isoforms TAFII15 and TAFII20); the interaction potentiates the transactivation activity (isoform TAFII20 only) and is inhibited by ATF7 sumoylation. Interacts with TAF4; the interaction inhibits the TAF12-dependent transactivation. Interacts with MAPK9; the interaction does not phosphorylate ATF7 but acts as a docking site for ATF7-associated partners such as JUN. Interacts with Ku complex components XRCC6 and XRCC7. Interacts with TERT. (Microbial infection) Interacts with adenovirus 2 E1A; the interaction enhances the ATF7-mediated viral transactivation activity which requires the zinc-binding domains of both E1A and ATF7. Post-translationally, on EGF stimulation, phosphorylated first on Thr-53 allowing subsequent phosphorylation on Thr-51. This latter phosphorylation prevents sumoylation, increases binding to TAF12 and enhances transcriptional activity. Sumoylation delays nuclear localization and inhibits transactivation activity through preventing binding to TAF12. RANBP2 appears to be the specific E3 ligase. In terms of processing, on EGF stimulation, phosphorylated first on Thr-53 allowing subsequent phosphorylation on Thr-51. This latter phosphorylation prevents sumoylation, increases binding to TAF12 and enhances transcriptional activity. Social isolation stress as well as TNF-alpha also induce the phosphorylation of ATF7. Phosphorylated in proliferating colonic and small intestinal epithelial cells. Expressed in various tissues including heart, brain, placenta, lung and skeletal muscle. Highest levels in skeletal muscle. Lowest in lung and placenta. In terms of tissue distribution, strongly expressed in skeletal muscle. Also expressed at lower levels in heart and lung.

It localises to the nucleus. The protein localises to the nucleoplasm. The protein resides in the chromosome. Its subcellular location is the telomere. It is found in the cytoplasm. In terms of biological role, stress-responsive chromatin regulator that plays a role in various biological processes including innate immunological memory, adipocyte differentiation or telomerase regulation. In absence of stress, contributes to the formation of heterochromatin and heterochromatin-like structure by recruiting histone H3K9 tri- and di-methyltransferases thus silencing the transcription of target genes such as STAT1 in adipocytes, or genes involved in innate immunity in macrophages and adipocytes. Stress induces ATF7 phosphorylation that disrupts interactions with histone methyltransferase and enhances the association with coactivators containing histone acetyltransferase and/or histone demethylase, leading to disruption of the heterochromatin-like structure and subsequently transcriptional activation. In response to TNF-alpha, which is induced by various stresses, phosphorylated ATF7 and telomerase are released from telomeres leading to telomere shortening. Also plays a role in maintaining epithelial regenerative capacity and protecting against cell death during intestinal epithelial damage and repair. Acts as a dominant repressor of the E-selectin/NF-ELAM1/delta-A promoter. Functionally, acts as a negative regulator, inhibiting both ATF2 and ATF7 transcriptional activities. It may exert these effects by sequestrating in the cytoplasm the Thr-53 phosphorylating kinase, preventing activation. This chain is Cyclic AMP-dependent transcription factor ATF-7 (ATF7), found in Homo sapiens (Human).